We begin with the raw amino-acid sequence, 1326 residues long: MVGGSSAQKLTTNDALAYLKAVKDKFQDKRDKYDEFLEVMKDFKAQRVDTTGVILRVKELFKGNRELILGFNTFLPKGFEITLRPEDDQPAAPKKPVEFEEAISFVNKIKTRFQGDDRVYKSFLDILNMYRKENKSITEVYHEVAILFRDHHDLLGEFTHFLPDTSATASTNDSVKVPVRDRGIKSLPTMRQIDLDKKDRIITSHPNRALKTENMDVDHERSLLKDSKEEVRRIDKKNDFMDDRDRKDYRGLDHDSHKEHFFNSKKKLIRKDDDSAEMSDQAREGDKFSGAIPSSSTYDEKGHSQELAFVDRVKAKLDTADNQEFLRCLNLYSKEIISQPELQSLVSDLIGVYPDLMDAFKVFLAQCDKNDGLLSGIVSKKSLWSEGKCPQPTKSLDKDTDREREKIERYRERDREKERLEKVAASQKWAKPISELDLSNCEQCTPSYRRLPKNYPIPIASQKMEIGSQVLNDHWVSVTSGSEDYSFKHMRKNQYEESLFKCEDDRFELDMLLESVISATNRVEELLAKINSNELKTDTPICIEDHLTALNLRCIERLYSDHGLDVLDLLKKNAYLALPVILTRLKQKQEEWARCRTEFNKVWADIYTKNYHRSLDHRSFYFKQQDSKNLSTKALLAEIKEISEKKRGEDDALLALAAGNRRTISSNMSFDYPDPDLHEDLYQLIKYSCGEMCSTEQLDKVMKVWTEFLEPIFGVPSRPQGAEDREDAVKSTNHDREDQEDAVSPQNGASIANSMRSNGPRKVNESNQVRQASELDKDVTSSKTSDALLSCDNTQNDKMPKNLTTPDERAETKQAVSIERAHNSNALPLDGLLPQRNGKISSLSVAGLSNSNPKPALTSGTEELKPNYVNGPRVEIGDNPVIPNGTVAEWFAGEAKVEREEGELSPTGDFEEDNYAVHGENDMEALSKSKENDATADDASAPRSSDGSGNTSHNGDVSGTDSGDGEDCYREDDIDHNKVESEGEAEEGMSDGHDDTEGDMPVLSISVKNLLHVKPLAKYVPPALYDKDNDDSRKNSQVFYGNDSFYVLFRLHQILYDRILSAKINSSSPDRKWKTSNPTNPADSYARIMDALYNLLDGTSDNSKFEDDCRAIIGTQSYVLFTLDKLIYKLIKHLQAVAADEMDNKLQQLYAYEKSRKPEKFLDAVYYENALVLLPDEDIYRIECEQSTPSKLSIQLLDYGHDKPDVTSISMDPTFAAYLHNVFLSYQPNAKENPRIYLKRNKRKNGGDDELCTTDEVKIINGLECKITCSSSKVSYVLDTEDVLHRAKRRKLLNQSGLPLAHDSVCSGSLIRQRRTQRYQKLLTGQ.

3 PAH domains span residues 8–78 (QKLT…LPKG), 95–165 (KPVE…LPDT), and 292–367 (IPSS…LAQC). Disordered regions lie at residues 272-299 (DDDSAEMSDQAREGDKFSGAIPSSSTYD), 715-812 (VPSR…RAET), 844-864 (SVAGLSNSNPKPALTSGTEEL), and 927-1000 (SKSK…EGDM). The span at 721-737 (GAEDREDAVKSTNHDRE) shows a compositional bias: basic and acidic residues. Composition is skewed to polar residues over residues 744–757 (SPQNGASIANSMRS), 781–805 (SSKTSDALLSCDNTQNDKMPKNLTT), 844–861 (SVAGLSNSNPKPALTSGT), and 942–961 (PRSSDGSGNTSHNGDVSGTD). The span at 967 to 981 (DCYREDDIDHNKVES) shows a compositional bias: basic and acidic residues.

The protein localises to the nucleus. In terms of biological role, acts as a transcriptional repressor. Plays roles in regulating gene expression and genome stability. The sequence is that of Paired amphipathic helix protein Sin3-like 4 (SNL4) from Arabidopsis thaliana (Mouse-ear cress).